A 907-amino-acid chain; its full sequence is Alanine--tRNA ligase (907 aa).

Residues His-602, His-606, Cys-706, and His-710 each coordinate Zn(2+).

It belongs to the class-II aminoacyl-tRNA synthetase family. It depends on Zn(2+) as a cofactor.

It localises to the cytoplasm. It carries out the reaction tRNA(Ala) + L-alanine + ATP = L-alanyl-tRNA(Ala) + AMP + diphosphate. Its function is as follows. Catalyzes the attachment of alanine to tRNA(Ala) in a two-step reaction: alanine is first activated by ATP to form Ala-AMP and then transferred to the acceptor end of tRNA(Ala). Also edits incorrectly charged Ser-tRNA(Ala) and Gly-tRNA(Ala) via its editing domain. The protein is Alanine--tRNA ligase of Thermofilum pendens (strain DSM 2475 / Hrk 5).